A 201-amino-acid polypeptide reads, in one-letter code: Histidine biosynthesis bifunctional protein HisIE (201 aa).

The phosphoribosyl-AMP cyclohydrolase stretch occupies residues 1-114 (MLTAQQIEKL…FAPAQTEWGF (114 aa)). Positions 115–201 (LYQLEKLLAS…SCVIRRLRER (87 aa)) are phosphoribosyl-ATP pyrophosphohydrolase.

This sequence in the N-terminal section; belongs to the PRA-CH family. It in the C-terminal section; belongs to the PRA-PH family.

Its subcellular location is the cytoplasm. It catalyses the reaction 1-(5-phospho-beta-D-ribosyl)-ATP + H2O = 1-(5-phospho-beta-D-ribosyl)-5'-AMP + diphosphate + H(+). It carries out the reaction 1-(5-phospho-beta-D-ribosyl)-5'-AMP + H2O = 1-(5-phospho-beta-D-ribosyl)-5-[(5-phospho-beta-D-ribosylamino)methylideneamino]imidazole-4-carboxamide. The protein operates within amino-acid biosynthesis; L-histidine biosynthesis; L-histidine from 5-phospho-alpha-D-ribose 1-diphosphate: step 2/9. It participates in amino-acid biosynthesis; L-histidine biosynthesis; L-histidine from 5-phospho-alpha-D-ribose 1-diphosphate: step 3/9. The chain is Histidine biosynthesis bifunctional protein HisIE from Photorhabdus laumondii subsp. laumondii (strain DSM 15139 / CIP 105565 / TT01) (Photorhabdus luminescens subsp. laumondii).